Reading from the N-terminus, the 653-residue chain is Fructose-1,6-bisphosphatase class 3 (653 aa).

Belongs to the FBPase class 3 family. Requires Mn(2+) as cofactor.

It catalyses the reaction beta-D-fructose 1,6-bisphosphate + H2O = beta-D-fructose 6-phosphate + phosphate. The protein operates within carbohydrate biosynthesis; gluconeogenesis. This chain is Fructose-1,6-bisphosphatase class 3, found in Listeria monocytogenes serotype 4b (strain CLIP80459).